Consider the following 533-residue polypeptide: Receptor homology region, transmembrane domain- and RING domain-containing protein 1 (533 aa).

A signal peptide spans Met-1–Ala-26. Residues Asn-27–Ser-167 are Lumenal-facing. Asn-34 carries N-linked (GlcNAc...) asparagine glycosylation. The cysteines at positions 68 and 91 are disulfide-linked. Positions Ala-84–Lys-145 constitute a PA domain. Residues Ile-168–Phe-188 traverse the membrane as a helical segment. The Cytoplasmic portion of the chain corresponds to Val-189 to Cys-533. The RING-type; atypical zinc-finger motif lies at Cys-236 to Lys-278. Disordered regions lie at residues Ser-309–Gln-329 and Leu-440–Ala-476. Positions Pro-448–Leu-463 are enriched in polar residues.

It is found in the prevacuolar compartment membrane. It localises to the protein storage vacuole membrane. The protein localises to the golgi apparatus membrane. Functionally, involved in the trafficking of vacuolar proteins. Functions probably as a sorting receptor for protein trafficking to the protein storage vacuole (PSV) by binding the C-terminal vacuolar sorting determinant (VSD) of vacuolar-sorted proteins. This is Receptor homology region, transmembrane domain- and RING domain-containing protein 1 from Oryza sativa subsp. japonica (Rice).